Reading from the N-terminus, the 367-residue chain is MTTLAWFAGRSMVLDLAALTSAFTVGYLLKSTSTPTSTPTSTDKAGTPPGSTIHHYGYPQGSVTKPNNSKTEKENGSPKDSKGNVPDCPYKYLVGLYGHHHFAGFVEALQPTLKDEDPEKYTLVLDIMDAVHLCLILVDDICDDSPKRKNQTTAHLLFGSCETANRAYLVLTKVINRAMRTRPVLGAELVRALELILEGQDLSLVWRRDGLAAFDAEEGGDKVSVYKKMAQLKTGTLFVLLGRLLNDGGAQLDDVLLRLGWYSQLQNDCKNIYSGEYANNKGAIAEDLRNGEMSFPVVVALGDQTTSSQIRKAFGSHSDGDIFDALDALQSSCIKNKCSQALQEAGRGLENLLAIWGRREHMDSLGS.

A signal peptide spans Met-1–Ala-22. Over residues Thr-32–Thr-42 the composition is skewed to low complexity. The tract at residues Thr-32–Asn-84 is disordered. Asn-67 is a glycosylation site (N-linked (GlcNAc...) asparagine). Positions Lys-70–Lys-82 are enriched in basic and acidic residues. His-132 provides a ligand contact to substrate. The Mg(2+) site is built by Asp-139 and Asp-143. Arg-148 contacts substrate. N-linked (GlcNAc...) asparagine glycosylation is present at Asn-150. Residues Lys-233, Thr-234, Gln-264, Asn-271, and Lys-281 each contribute to the substrate site.

This sequence belongs to the FPP/GGPP synthase family. The cofactor is Mg(2+).

The protein operates within secondary metabolite biosynthesis. Functionally, prenyltransferase; part of the gene cluster that mediates the biosynthesis of paspalitrems, indole-diterpene (IDT) mycotoxins that are potent tremorgens in mammals. The geranylgeranyl diphosphate (GGPP) synthase idtG is proposed to catalyze the first step in IDT biosynthesis via catalysis of a series of iterative condensations of isopentenyl diphosphate (IPP) with dimethylallyl diphosphate (DMAPP), geranyl diphosphate (GPP), and farnesyl diphosphate (FPP), to form GGPP. Condensation of indole-3-glycerol phosphate with GGPP by the prenyltransferase idtC then forms 3-geranylgeranylindole (3-GGI). Epoxidation of the two terminal alkenes of the geranylgeranyl moiety by the FAD-dependent monooxygenase idtM, and cyclization by the terpene cyclase idtB then leads to the production of paspaline. The cytochrome P450 monooxygenase idtP then catalyzes oxidative elimination of the pendant methyl group at C-12 of paspaline and generates the C-10 ketone to yield 13-desoxypaxilline. The cytochrome P450 monooxygenase idtQ may catalyze the C-13 oxidation of 13-desoxypaxilline to afford paxilline. Considering that both paspalicine and paxilline were detected in C.paspali, idtQ also catalyzes the formation of paspalinine from 13-desoxypaxilline via paspalicine as an intermediate. Finally, the alpha-prenyltransferase idtF prenylates paspalinine at the C-20 or the C-21 positions to yield paspalitrems A and C, respectively. The hydroxylation of paspalitrem A at C-32 by a still unknown oxidase affords paspalitrem B. The sequence is that of Prenyltransferase idtC from Claviceps paspali (Rye ergot fungus).